The primary structure comprises 203 residues: Urease accessory protein UreG (203 aa).

14-21 is a GTP binding site; the sequence is GPVGSGKT.

The protein belongs to the SIMIBI class G3E GTPase family. UreG subfamily. In terms of assembly, homodimer. UreD, UreF and UreG form a complex that acts as a GTP-hydrolysis-dependent molecular chaperone, activating the urease apoprotein by helping to assemble the nickel containing metallocenter of UreC. The UreE protein probably delivers the nickel.

Its subcellular location is the cytoplasm. Facilitates the functional incorporation of the urease nickel metallocenter. This process requires GTP hydrolysis, probably effectuated by UreG. This chain is Urease accessory protein UreG, found in Agrobacterium fabrum (strain C58 / ATCC 33970) (Agrobacterium tumefaciens (strain C58)).